The primary structure comprises 399 residues: Acetate kinase (399 aa).

Mg(2+) is bound at residue N7. K14 is a binding site for ATP. R91 contributes to the substrate binding site. The active-site Proton donor/acceptor is the D148. Residues 208-212 (HLGNG) and 283-285 (DFR) contribute to the ATP site. Position 384 (E384) interacts with Mg(2+).

Belongs to the acetokinase family. Homodimer. Mg(2+) serves as cofactor. The cofactor is Mn(2+).

It localises to the cytoplasm. It carries out the reaction acetate + ATP = acetyl phosphate + ADP. Its pathway is metabolic intermediate biosynthesis; acetyl-CoA biosynthesis; acetyl-CoA from acetate: step 1/2. Functionally, catalyzes the formation of acetyl phosphate from acetate and ATP. Can also catalyze the reverse reaction. This is Acetate kinase from Dictyoglomus thermophilum (strain ATCC 35947 / DSM 3960 / H-6-12).